The following is a 503-amino-acid chain: Probable cytosol aminopeptidase (503 aa).

Mn(2+)-binding residues include lysine 270 and aspartate 275. Lysine 282 is a catalytic residue. Residues aspartate 293, aspartate 352, and glutamate 354 each contribute to the Mn(2+) site. Arginine 356 is an active-site residue.

The protein belongs to the peptidase M17 family. Mn(2+) is required as a cofactor.

The protein resides in the cytoplasm. It catalyses the reaction Release of an N-terminal amino acid, Xaa-|-Yaa-, in which Xaa is preferably Leu, but may be other amino acids including Pro although not Arg or Lys, and Yaa may be Pro. Amino acid amides and methyl esters are also readily hydrolyzed, but rates on arylamides are exceedingly low.. It carries out the reaction Release of an N-terminal amino acid, preferentially leucine, but not glutamic or aspartic acids.. Its function is as follows. Presumably involved in the processing and regular turnover of intracellular proteins. Catalyzes the removal of unsubstituted N-terminal amino acids from various peptides. In Shigella boydii serotype 18 (strain CDC 3083-94 / BS512), this protein is Probable cytosol aminopeptidase.